Here is a 301-residue protein sequence, read N- to C-terminus: MKKVKVCSPGTSANLGPGYDIFGLALSNPYDIVEVEKTENGITISVEGEKAEEIPTNVDENTAGVVAKKMIEDFKIESGIHIHIIKGIKPGSGLGSSSASCAGIAFALNELFELKLSKLELVKYSSLGEAVAAGAPHADNVAPAIFGGFTLTTSYEPLEVLHIPVDLEVLVALPNIQVSTKTAREILPKEIPIKDMVNNVGKAAGMVYALYNNDLDLFGRYMSKDCVVEPCRANLIDGYTEVKEKVKDMVYGITISGSGPAIITIPKKEHVIDIENIFKEVWNCPVYYTKVGPGCYVEEIE.

Residue 89–99 participates in ATP binding; that stretch reads KPGSGLGSSSA.

It belongs to the GHMP kinase family. Homoserine kinase subfamily.

Its subcellular location is the cytoplasm. The catalysed reaction is L-homoserine + ATP = O-phospho-L-homoserine + ADP + H(+). Its pathway is amino-acid biosynthesis; L-threonine biosynthesis; L-threonine from L-aspartate: step 4/5. In terms of biological role, catalyzes the ATP-dependent phosphorylation of L-homoserine to L-homoserine phosphate. The sequence is that of Homoserine kinase from Methanococcus maripaludis (strain DSM 14266 / JCM 13030 / NBRC 101832 / S2 / LL).